We begin with the raw amino-acid sequence, 639 residues long: ATP-dependent zinc metalloprotease FtsH (639 aa).

At 1-20 (MNGNNNMNNNGKSNNKKKNK) the chain is on the cytoplasmic side. Residues 21–41 (NWILGLVVVFLISAIFMSYFI) traverse the membrane as a helical segment. Topologically, residues 42–120 (RGGESYKNVP…LSSGKSQASL (79 aa)) are periplasmic. Residues 121–141 (IGVLLQTLPWILFFIFFFFIF) traverse the membrane as a helical segment. The Cytoplasmic segment spans residues 142–639 (RQTQGGGGKV…KEVKGEDVKG (498 aa)). 212–219 (GSPGTGKT) is an ATP binding site. H434 contributes to the Zn(2+) binding site. Residue E435 is part of the active site. The Zn(2+) site is built by H438 and D510.

It in the central section; belongs to the AAA ATPase family. This sequence in the C-terminal section; belongs to the peptidase M41 family. As to quaternary structure, homohexamer. Requires Zn(2+) as cofactor.

It is found in the cell inner membrane. Its function is as follows. Acts as a processive, ATP-dependent zinc metallopeptidase for both cytoplasmic and membrane proteins. Plays a role in the quality control of integral membrane proteins. The sequence is that of ATP-dependent zinc metalloprotease FtsH from Borreliella burgdorferi (strain ZS7) (Borrelia burgdorferi).